The primary structure comprises 525 residues: uncharacterized protein (525 aa).

Polar residues-rich tracts occupy residues 139–149 (LNSTPDKTQAG) and 336–349 (SGKTDNAQETHTTS). Disordered stretches follow at residues 139-158 (LNSTPDKTQAGKTAKQHQAP) and 330-356 (PAPAKNSGKTDNAQETHTTSPPGPYAT).

This is an uncharacterized protein from Treponema pallidum (strain Nichols).